The sequence spans 131 residues: Torsin-1A-interacting protein 2, isoform IFRG15 (131 aa).

This chain is Torsin-1A-interacting protein 2, isoform IFRG15 (Tor1aip2), found in Mus musculus (Mouse).